The sequence spans 235 residues: Aspartate/glutamate leucyltransferase (235 aa).

The protein belongs to the R-transferase family. Bpt subfamily.

The protein localises to the cytoplasm. It catalyses the reaction N-terminal L-glutamyl-[protein] + L-leucyl-tRNA(Leu) = N-terminal L-leucyl-L-glutamyl-[protein] + tRNA(Leu) + H(+). The enzyme catalyses N-terminal L-aspartyl-[protein] + L-leucyl-tRNA(Leu) = N-terminal L-leucyl-L-aspartyl-[protein] + tRNA(Leu) + H(+). In terms of biological role, functions in the N-end rule pathway of protein degradation where it conjugates Leu from its aminoacyl-tRNA to the N-termini of proteins containing an N-terminal aspartate or glutamate. This chain is Aspartate/glutamate leucyltransferase, found in Pseudomonas aeruginosa (strain LESB58).